The sequence spans 160 residues: uncharacterized protein (160 aa).

The helical transmembrane segment at 27–47 threads the bilayer; that stretch reads VMNSYFIAGCGPAVCYYAVSW.

It localises to the membrane. This is an uncharacterized protein from Homo sapiens (Human).